Reading from the N-terminus, the 562-residue chain is Arginine--tRNA ligase (562 aa).

Positions 136 to 146 match the 'HIGH' region motif; that stretch reads ANPTGPMHMGN.

This sequence belongs to the class-I aminoacyl-tRNA synthetase family. Monomer.

The protein resides in the cytoplasm. The enzyme catalyses tRNA(Arg) + L-arginine + ATP = L-arginyl-tRNA(Arg) + AMP + diphosphate. The protein is Arginine--tRNA ligase (argS) of Caldanaerobacter subterraneus subsp. tengcongensis (strain DSM 15242 / JCM 11007 / NBRC 100824 / MB4) (Thermoanaerobacter tengcongensis).